The following is a 557-amino-acid chain: Membrane protein insertase YidC (557 aa).

Residues 3–23 (NLRPVLYLSMLLVLFLIWQAW) form a helical membrane-spanning segment. Residues 34-60 (APGAQEQVMDRDGVPAPPQDVPDAPVS) are disordered. The next 4 membrane-spanning stretches (helical) occupy residues 366 to 386 (VVGN…LVFY), 436 to 456 (LGGC…YWVL), 480 to 500 (YFIL…LNPA), and 514 to 534 (PFVF…YWFV).

The protein belongs to the OXA1/ALB3/YidC family. Type 1 subfamily. As to quaternary structure, interacts with the Sec translocase complex via SecD. Specifically interacts with transmembrane segments of nascent integral membrane proteins during membrane integration.

It localises to the cell inner membrane. Functionally, required for the insertion and/or proper folding and/or complex formation of integral membrane proteins into the membrane. Involved in integration of membrane proteins that insert both dependently and independently of the Sec translocase complex, as well as at least some lipoproteins. Aids folding of multispanning membrane proteins. This Thioalkalivibrio sulfidiphilus (strain HL-EbGR7) protein is Membrane protein insertase YidC.